Consider the following 1495-residue polypeptide: ABC transporter C family member 12 (1495 aa).

11 helical membrane passes run 38 to 58 (VMLV…WIIF), 76 to 96 (VLGL…VMGI), 110 to 130 (FEVA…VLIG), 146 to 166 (FGVL…LPLK), 173 to 195 (ALYL…LIYI), 303 to 323 (FWLA…GPVI), 337 to 357 (AWVG…GVLC), 420 to 440 (GLWS…QQLG), 441 to 461 (VASL…TLII), 528 to 548 (FILN…FVLL), and 558 to 578 (FTSL…PNLL). The 281-residue stretch at 303–583 (FWLAGIFKIG…LPNLLSQVVN (281 aa)) folds into the ABC transmembrane type-1 1 domain. The 225-residue stretch at 615–839 (ISIKNGYFSW…GILFKKLMEN (225 aa)) folds into the ABC transporter 1 domain. Residue 650 to 657 (GGTGEGKT) participates in ATP binding. Helical transmembrane passes span 907–927 (AVGG…TEVL), 949–969 (PGFY…VTFT), 1042–1062 (FALI…LLIL), 1140–1160 (LETL…LQNG), and 1166–1186 (AGFA…TSLL). The region spanning 914–1198 (VMILLACYLA…VLRQASRAEN (285 aa)) is the ABC transmembrane type-1 2 domain. One can recognise an ABC transporter 2 domain in the interval 1235 to 1469 (IKFEDVHLRY…DTSAFFRMVH (235 aa)). ATP is bound at residue 1269-1276 (GRTGAGKS).

It belongs to the ABC transporter superfamily. ABCC family. Conjugate transporter (TC 3.A.1.208) subfamily. As to expression, ubiquitous.

The protein localises to the membrane. It catalyses the reaction ATP + H2O + xenobioticSide 1 = ADP + phosphate + xenobioticSide 2.. Pump for glutathione S-conjugates. This chain is ABC transporter C family member 12 (ABCC12), found in Arabidopsis thaliana (Mouse-ear cress).